The chain runs to 319 residues: Myoblast determination protein 1 (319 aa).

Met1 participates in a covalent cross-link: Peptide (Met-Gly) (interchain with G-Cter in ubiquitin). N6-methyllysine; by EHMT2 is present on Lys104. The bHLH domain maps to 109–160 (DRRKAATMRERRRLSKVNEAFETLKRCTSSNPNQRLPKVEILRNAIRYIEGL). 2 disordered regions span residues 174 to 222 (AAAA…GARR) and 267 to 319 (PALL…YQVL). Positions 197–207 (SDASSPRSNCS) are enriched in polar residues. Over residues 267-276 (PALLLADAPP) the composition is skewed to low complexity.

As to quaternary structure, efficient DNA binding requires dimerization with another bHLH protein. Seems to form active heterodimers with ITF-2. Interacts with SUV39H1. Interacts with DDX5. Interacts with CHD2. Interacts with TSC22D3. Interacts with SETD3. Interacts with P-TEFB complex; promotes the transcriptional activity of MYOD1 through its CDK9-mediated phosphorylation. Interacts with CSRP3. Interacts with NUPR1. Phosphorylated by CDK9. This phosphorylation promotes its function in muscle differentiation. In terms of processing, acetylated by a complex containing EP300 and PCAF. The acetylation is essential to activate target genes. Conversely, its deacetylation by SIRT1 inhibits its function. Post-translationally, ubiquitinated on the N-terminus; which is required for proteasomal degradation. Methylation at Lys-104 by EHMT2/G9a inhibits myogenic activity.

Its subcellular location is the nucleus. In terms of biological role, acts as a transcriptional activator that promotes transcription of muscle-specific target genes and plays a role in muscle differentiation. Together with MYF5 and MYOG, co-occupies muscle-specific gene promoter core region during myogenesis. Induces fibroblasts to differentiate into myoblasts. Interacts with and is inhibited by the twist protein. This interaction probably involves the basic domains of both proteins. The sequence is that of Myoblast determination protein 1 (MYOD1) from Ovis aries (Sheep).